The primary structure comprises 416 residues: Neamine transaminase NeoN (416 aa).

Lys231 is subject to N6-(pyridoxal phosphate)lysine.

Belongs to the class-III pyridoxal-phosphate-dependent aminotransferase family. It depends on pyridoxal 5'-phosphate as a cofactor.

The catalysed reaction is neomycin C + 2-oxoglutarate = 6'''-deamino-6'''-oxoneomycin C + L-glutamate. The enzyme catalyses neamine + 2-oxoglutarate = 6'-oxoparomamine + L-glutamate. Its pathway is antibiotic biosynthesis; neomycin biosynthesis. Functionally, 6'-oxoglucosaminyl:L-glutamate aminotransferase that catalyzes pyridoxal-5'-phosphate-mediated transamination for the conversion of paromamine to neamine in the biosynthetic pathway of neomycin. Also able to catalyze deamination at C-6''' of neomycin. This is Neamine transaminase NeoN (neoN) from Streptomyces fradiae (Streptomyces roseoflavus).